The primary structure comprises 241 residues: Large ribosomal subunit protein uL30 (241 aa).

Positions 1–32 (MATTLKPETLQKKEKAQQKTAEERAAAKKVRK) are disordered. Residues 9-26 (TLQKKEKAQQKTAEERAA) show a composition bias toward basic and acidic residues.

Belongs to the universal ribosomal protein uL30 family. As to quaternary structure, component of the large ribosomal subunit. Mature ribosomes consist of a small (40S) and a large (60S) subunit. The 40S subunit contains about 32 different proteins and 1 molecule of RNA (18S). The 60S subunit contains 45 different proteins and 3 molecules of RNA (25S, 5.8S and 5S).

It localises to the cytoplasm. Its function is as follows. Component of the ribosome, a large ribonucleoprotein complex responsible for the synthesis of proteins in the cell. The small ribosomal subunit (SSU) binds messenger RNAs (mRNAs) and translates the encoded message by selecting cognate aminoacyl-transfer RNA (tRNA) molecules. The large subunit (LSU) contains the ribosomal catalytic site termed the peptidyl transferase center (PTC), which catalyzes the formation of peptide bonds, thereby polymerizing the amino acids delivered by tRNAs into a polypeptide chain. The nascent polypeptides leave the ribosome through a tunnel in the LSU and interact with protein factors that function in enzymatic processing, targeting, and the membrane insertion of nascent chains at the exit of the ribosomal tunnel. This Candida albicans (strain SC5314 / ATCC MYA-2876) (Yeast) protein is Large ribosomal subunit protein uL30.